Consider the following 780-residue polypeptide: Ribosome biogenesis protein BOP1 homolog (780 aa).

A compositionally biased stretch (basic residues) spans 1–11 (MTKKQAIKRKV). Residues 1 to 155 (MTKKQAIKRK…DSDTSDEEDI (155 aa)) form a disordered region. Residues 17-26 (TNEQSSASEP) show a composition bias toward polar residues. 4 stretches are compositionally biased toward acidic residues: residues 44–53 (EDTTDDEGID), 60–72 (SSEDLEFESDEEG), 83–113 (AEGDAEEDEDDDEEEDEDSDEASEDNDDAEE), and 145–154 (EDSDTSDEED). WD repeat units lie at residues 441 to 482 (GHTD…RTIE), 484 to 522 (NDVVRCVAWCPNAKLSIIAVATGSRLLLINPKVGDKLLI), 566 to 608 (THFK…SQIP), 611 to 649 (KSKGLIQCVLFHPVKPCFFVATQHNIRIYDLVKQELIKK), 652 to 691 (TNSKWISGMSIHPKGDNLLVSTYDKKMLWFDLDLSTKPYQ), 695 to 734 (LHRNAVRSVAFHLRYPLFASGSDDQAVIVSHGMVYNDLLQ), and 750 to 780 (RDEFGVLDVSWHPVQPWVFSTGADCTIRLYT).

The protein belongs to the WD repeat BOP1/ERB1 family.

It localises to the nucleus. The protein localises to the nucleolus. It is found in the nucleoplasm. Its function is as follows. Required for maturation of ribosomal RNAs and formation of the large ribosomal subunit. The polypeptide is Ribosome biogenesis protein BOP1 homolog (Drosophila virilis (Fruit fly)).